Reading from the N-terminus, the 60-residue chain is Large ribosomal subunit protein uL30 (60 aa).

The protein belongs to the universal ribosomal protein uL30 family. As to quaternary structure, part of the 50S ribosomal subunit.

The protein is Large ribosomal subunit protein uL30 of Salinispora tropica (strain ATCC BAA-916 / DSM 44818 / JCM 13857 / NBRC 105044 / CNB-440).